The sequence spans 350 residues: Biotin synthase (350 aa).

Residues 38–256 (NYVQVSTLLS…IAVARIMMPE (219 aa)) form the Radical SAM core domain. Residues C53, C57, and C60 each contribute to the [4Fe-4S] cluster site. Residues C97, C128, C188, and R260 each coordinate [2Fe-2S] cluster.

The protein belongs to the radical SAM superfamily. Biotin synthase family. Homodimer. It depends on [4Fe-4S] cluster as a cofactor. [2Fe-2S] cluster serves as cofactor.

It catalyses the reaction (4R,5S)-dethiobiotin + (sulfur carrier)-SH + 2 reduced [2Fe-2S]-[ferredoxin] + 2 S-adenosyl-L-methionine = (sulfur carrier)-H + biotin + 2 5'-deoxyadenosine + 2 L-methionine + 2 oxidized [2Fe-2S]-[ferredoxin]. The protein operates within cofactor biosynthesis; biotin biosynthesis; biotin from 7,8-diaminononanoate: step 2/2. Its function is as follows. Catalyzes the conversion of dethiobiotin (DTB) to biotin by the insertion of a sulfur atom into dethiobiotin via a radical-based mechanism. In Aliivibrio salmonicida (strain LFI1238) (Vibrio salmonicida (strain LFI1238)), this protein is Biotin synthase.